The primary structure comprises 310 residues: tRNA uridine(34) hydroxylase (310 aa).

The Rhodanese domain maps to 127–225 (KNQNTIVIDT…YLDDIPKEKN (99 aa)). Residue cysteine 185 is the Cysteine persulfide intermediate of the active site.

It belongs to the TrhO family.

It carries out the reaction uridine(34) in tRNA + AH2 + O2 = 5-hydroxyuridine(34) in tRNA + A + H2O. Its function is as follows. Catalyzes oxygen-dependent 5-hydroxyuridine (ho5U) modification at position 34 in tRNAs. This chain is tRNA uridine(34) hydroxylase, found in Prochlorococcus marinus (strain MIT 9312).